Here is a 524-residue protein sequence, read N- to C-terminus: Hydroxysteroid dehydrogenase-like protein 2 (524 aa).

Residues 17–23 (GASRGIG), lysine 42, and aspartate 74 each bind NADP(+). Position 42 is an N6-(2-hydroxyisobutyryl)lysine (lysine 42). At lysine 116 the chain carries N6-acetyllysine. The active-site Proton acceptor is tyrosine 168. Lysine 172 lines the NADP(+) pocket. The segment covering 283–300 (EEKESYDPVPEVKEEKLQ) has biased composition (basic and acidic residues). Residues 283–410 (EEKESYDPVP…PLLQSVLPPK (128 aa)) are disordered. Positions 301–391 (LQEQPQLQEQ…QQQPQQRPQQ (91 aa)) are enriched in low complexity. The region spanning 414–521 (GAVEETFRIV…KLEKLMTHMN (108 aa)) is the SCP2 domain. Lysine 424 carries the post-translational modification N6-succinyllysine.

This sequence belongs to the short-chain dehydrogenases/reductases (SDR) family.

It is found in the peroxisome. The protein resides in the mitochondrion. Functionally, has apparently no steroid dehydrogenase activity. Controls bile acid (BA) and lipid metabolism in response to nutritional cues. The protein is Hydroxysteroid dehydrogenase-like protein 2 (Hsdl2) of Rattus norvegicus (Rat).